The primary structure comprises 291 residues: 33 kDa chaperonin (291 aa).

Intrachain disulfides connect Cys-237-Cys-239 and Cys-270-Cys-273.

Belongs to the HSP33 family. In terms of processing, under oxidizing conditions two disulfide bonds are formed involving the reactive cysteines. Under reducing conditions zinc is bound to the reactive cysteines and the protein is inactive.

The protein localises to the cytoplasm. Its function is as follows. Redox regulated molecular chaperone. Protects both thermally unfolding and oxidatively damaged proteins from irreversible aggregation. Plays an important role in the bacterial defense system toward oxidative stress. The polypeptide is 33 kDa chaperonin (Bacillus mycoides (strain KBAB4) (Bacillus weihenstephanensis)).